The following is a 77-amino-acid chain: Secapin (77 aa).

An N-terminal signal peptide occupies residues 1–32 (MKNYSKNATHLITVLLFSFVVILLIIPSKCEA). The propeptide occupies 33 to 52 (VSNDMQPLEARSADLVPEPR). Cysteines 61 and 72 form a disulfide.

Belongs to the secapin family. Expressed by the venom gland.

Its subcellular location is the secreted. In terms of biological role, serine protease inhibitor which exhibits antifibrinolytic, antielastolytic and antimicrobial activities. Displays antimicrobial activity against bacteria and fungi. Likely functions in the innate immune response to microbial infection and possibly in the venom, as an antifibrinolytic agent. Not toxic to mice but does induce slight sedation at higher doses (from 40 mg/kg). At a dose of 80 mg/kg, sedation occurs 15 minutes after injection and is accompanied by piloerection and hypothermia. The protein is Secapin of Apis mellifera (Honeybee).